We begin with the raw amino-acid sequence, 505 residues long: Lysine--tRNA ligase (505 aa).

The Mg(2+) site is built by Glu415 and Glu422.

This sequence belongs to the class-II aminoacyl-tRNA synthetase family. Homodimer. Mg(2+) serves as cofactor.

It localises to the cytoplasm. The enzyme catalyses tRNA(Lys) + L-lysine + ATP = L-lysyl-tRNA(Lys) + AMP + diphosphate. The sequence is that of Lysine--tRNA ligase from Xanthomonas axonopodis pv. citri (strain 306).